A 151-amino-acid polypeptide reads, in one-letter code: Myosin light polypeptide 6 (151 aa).

At Cys-2 the chain carries N-acetylcysteine. EF-hand domains are found at residues 7-42, 84-119, and 119-151; these read EQTAEFKEAFQLFDRTGDGKILYSQCGDVMRALGQN, GCFEDYVEGLRVFDKEGNGTVMGAEIRHVLVTLGEK, and KMTEEEVEQLVAGHEDSNGCINYEELVRMVLSG.

As to quaternary structure, myosin is a hexamer of 2 heavy chains and 4 light chains.

Its function is as follows. Regulatory light chain of myosin. Does not bind calcium. This chain is Myosin light polypeptide 6 (MYL6), found in Gallus gallus (Chicken).